The chain runs to 651 residues: Acetyl-coenzyme A synthetase (651 aa).

CoA-binding positions include 189–192 (RGGK), Thr311, and Asn335. ATP contacts are provided by residues 387 to 389 (GEP), 411 to 416 (DTWWQT), Asp500, and Arg515. Ser523 is a CoA binding site. Arg526 is a binding site for ATP. Residues Val537, His539, and Val542 each contribute to the Mg(2+) site. Position 586 (Arg586) interacts with CoA. Lys611 is subject to N6-acetyllysine.

The protein belongs to the ATP-dependent AMP-binding enzyme family. The cofactor is Mg(2+). Post-translationally, acetylated. Deacetylation by the SIR2-homolog deacetylase activates the enzyme.

The enzyme catalyses acetate + ATP + CoA = acetyl-CoA + AMP + diphosphate. Its function is as follows. Catalyzes the conversion of acetate into acetyl-CoA (AcCoA), an essential intermediate at the junction of anabolic and catabolic pathways. AcsA undergoes a two-step reaction. In the first half reaction, AcsA combines acetate with ATP to form acetyl-adenylate (AcAMP) intermediate. In the second half reaction, it can then transfer the acetyl group from AcAMP to the sulfhydryl group of CoA, forming the product AcCoA. The polypeptide is Acetyl-coenzyme A synthetase (Brucella anthropi (strain ATCC 49188 / DSM 6882 / CCUG 24695 / JCM 21032 / LMG 3331 / NBRC 15819 / NCTC 12168 / Alc 37) (Ochrobactrum anthropi)).